Consider the following 507-residue polypeptide: Maturase K (507 aa).

This sequence belongs to the intron maturase 2 family. MatK subfamily.

It localises to the plastid. The protein localises to the chloroplast. Usually encoded in the trnK tRNA gene intron. Probably assists in splicing its own and other chloroplast group II introns. The protein is Maturase K of Nymphaea alba (White water-lily).